The chain runs to 503 residues: Probable cytosol aminopeptidase (503 aa).

Mn(2+) is bound by residues Lys-274 and Asp-279. Lys-286 is a catalytic residue. The Mn(2+) site is built by Asp-297, Asp-356, and Glu-358. Arg-360 is a catalytic residue.

This sequence belongs to the peptidase M17 family. The cofactor is Mn(2+).

It localises to the cytoplasm. The enzyme catalyses Release of an N-terminal amino acid, Xaa-|-Yaa-, in which Xaa is preferably Leu, but may be other amino acids including Pro although not Arg or Lys, and Yaa may be Pro. Amino acid amides and methyl esters are also readily hydrolyzed, but rates on arylamides are exceedingly low.. The catalysed reaction is Release of an N-terminal amino acid, preferentially leucine, but not glutamic or aspartic acids.. Its function is as follows. Presumably involved in the processing and regular turnover of intracellular proteins. Catalyzes the removal of unsubstituted N-terminal amino acids from various peptides. This chain is Probable cytosol aminopeptidase, found in Burkholderia orbicola (strain MC0-3).